The chain runs to 121 residues: Somatostatin-1 (121 aa).

The first 24 residues, 1-24, serve as a signal peptide directing secretion; it reads MKMVSSSRLRCLLVLLLSLTASIS. The propeptide occupies 25 to 105; it reads CSFAGQRDSK…SGGPLLAPRE (81 aa). Positions 76–99 are disordered; that stretch reads NFPLAEGGPEDAHADLERAASGGP. Residues cysteine 110 and cysteine 121 are joined by a disulfide bond.

Belongs to the somatostatin family.

Its subcellular location is the secreted. In terms of biological role, somatostatin inhibits the release of somatotropin. This Lophius americanus (American angler) protein is Somatostatin-1 (sst1).